Reading from the N-terminus, the 273-residue chain is uncharacterized protein (273 aa).

A helical membrane pass occupies residues Phe-7–Val-25. Disordered regions lie at residues Lys-34 to Lys-154 and Leu-168 to Trp-273. Positions Gln-36–Asn-54 are enriched in basic residues. Residues Thr-55 to Pro-91 are compositionally biased toward basic and acidic residues. Residues Val-92–Lys-101 are compositionally biased toward low complexity. Residues Pro-115–His-144 show a composition bias toward basic and acidic residues. Positions Ser-145 to Lys-154 are enriched in polar residues. Basic residues predominate over residues Lys-201–Arg-212. Positions Ala-213–Arg-240 are enriched in basic and acidic residues. The segment covering Leu-245–Gly-266 has biased composition (polar residues).

It localises to the cytoplasm. It is found in the membrane. This is an uncharacterized protein from Schizosaccharomyces pombe (strain 972 / ATCC 24843) (Fission yeast).